Reading from the N-terminus, the 377-residue chain is tRNA(Met) cytidine acetate ligase (377 aa).

ATP is bound by residues 7–20 (ITEYNPFHNGHLFH), Gly-100, Asn-153, and Arg-178.

Belongs to the TmcAL family.

The protein resides in the cytoplasm. It carries out the reaction cytidine(34) in elongator tRNA(Met) + acetate + ATP = N(4)-acetylcytidine(34) in elongator tRNA(Met) + AMP + diphosphate. In terms of biological role, catalyzes the formation of N(4)-acetylcytidine (ac(4)C) at the wobble position of elongator tRNA(Met), using acetate and ATP as substrates. First activates an acetate ion to form acetyladenylate (Ac-AMP) and then transfers the acetyl group to tRNA to form ac(4)C34. The chain is tRNA(Met) cytidine acetate ligase from Staphylococcus epidermidis (strain ATCC 12228 / FDA PCI 1200).